Here is a 1200-residue protein sequence, read N- to C-terminus: MRIKRLDITGFKSFMERSVFTFDEGVTGIVGPNGCGKSNVVDAIRWVMGEQSAKNLRGRGMEDVIFNGSENKPPLSMAEVSLTFIVDDTDQLAPQYQGFSEVTVTRRLFRNGDSEYLINKTLCRLLDITELFLGTGVGTKAYSIIEQGRVGLIVSSKPEDRRHLLEEAAGVTKYKARRKAAERKMEATDANLLRVTDITNELEKRLDALSRQAKKAEKYKKLKARMRDIDLHAATHRQLELMAEKKMLQSRLENLGSEERESLDRVKELEETITRRRTELEAETAALQALAAEVHTLESSLQRDTQEMTYGKRDLEETRARVAAAQVELDGLLARKAEMSEAMAAREAELSGIAGSWKEDEVAMQVAQEELRRVSQLQTEVALRLEQERAGLVAVATRLANHESNLVNLARQRGDLGARRAKLQGELETLRAQEQTLENVRGDVAKRVEDTRHLAAELAERKGQEEDALTRTRAAFTENEIEVIALREELSDKRSRLSTLEDIQKNYDGFDRGVRAVMTRAGVQAREQGIFGLVADVINVTPRYERAVEAALGERLQHVIVESRDKGVELVDYLKGHAEGRGSFLPVPALDTLPAPLEPDFSQPGVLAHALREVTCEEALTPLVQLLLGDVVIVQDVATARAWTESGGPACTLVTVEGEVFRPDGTIVGGESEGAAVGALQKKREIAELATEVARVEERYNEILTRHYTLQKQMGHAEGVLKGLAKNQHAEELNLASQEKDLHKAGEDLARVRERVRALEVEEGQLTQSHQALEHEEEASRGEVAHGQADREGREERVKQLVSEQESLRLRAETANGELTGLRIKVAAGSERGESARKELDSLVSQRQDMETRITRLQATVVEGGARVEELARRTTDTEGGLSQRAEEHRLAAEGLEARRAAHTTASAEVREQDATFRELRGRVDELMQGLSQISLREREIALELEHLAAGIRERHQVELANELHKYHMLAALAPETEAELKDLRAQVEKMGEINLTAIDEHAELSKRYDFLTAQKKDLQSSIEQLKEAIQRIDATSRERFKQTFDVVNEKFQAIFPRLFGGGRASLILTNEGPGGEPGVEIVAQPPGKKLQSVNLLSGGEKALTAVGLIFGIFLIKPTPFCLLDEVDAPLDEGNVGRYNDMVKEMSKQSQFILITHNKRTMEVSNTLYGVTMEEPGISKLVSVRMREAGAANDDKVTAA.

An ATP-binding site is contributed by 32–39 (PNGCGKSN). 2 coiled-coil regions span residues 171–219 (VTKY…AEKY) and 252–342 (LENL…MSEA). In terms of domain architecture, SMC hinge spans 528–644 (QGIFGLVADV…QDVATARAWT (117 aa)). 2 coiled-coil regions span residues 679–706 (ALQKKREIAELATEVARVEERYNEILTR) and 735–762 (LASQEKDLHKAGEDLARVRERVRALEVE). The segment at 763 to 795 (EGQLTQSHQALEHEEEASRGEVAHGQADREGRE) is disordered. Residues 772 to 795 (ALEHEEEASRGEVAHGQADREGRE) show a composition bias toward basic and acidic residues. A coiled-coil region spans residues 1002–1039 (HAELSKRYDFLTAQKKDLQSSIEQLKEAIQRIDATSRE).

This sequence belongs to the SMC family. As to quaternary structure, homodimer. Probably forms the Structural Maintenance of Chromosome (SMC) condensin-like complex with ScpA and ScpB.

The protein localises to the cytoplasm. Functionally, a conditionally essential component of the chromosome segregation machinery. Required for chromosome condensation and partitioning. Important for positioning of ParB-parS complexes (ori of replication) and of the ter replication site, as well as for segration of the ParB-parS complex and thus chromosome segregation. May act via the formation of a condensin-like complex containing Smc, ScpA and ScpB that pulls DNA away from mid-cell into both cell halves. In Myxococcus xanthus (strain DK1622), this protein is Chromosome partition protein Smc.